Consider the following 137-residue polypeptide: Acidic phospholipase A2 Vur-PL3 (137 aa).

The N-terminal stretch at 1–16 (MRTLWIVAVCLIGVEG) is a signal peptide. 7 disulfides stabilise this stretch: cysteine 42-cysteine 131, cysteine 44-cysteine 60, cysteine 59-cysteine 111, cysteine 65-cysteine 137, cysteine 66-cysteine 104, cysteine 73-cysteine 97, and cysteine 91-cysteine 102. Tyrosine 43, glycine 45, and glycine 47 together coordinate Ca(2+). Histidine 63 is a catalytic residue. Aspartate 64 serves as a coordination point for Ca(2+). Aspartate 105 is an active-site residue.

Ca(2+) is required as a cofactor. In terms of tissue distribution, expressed by the venom gland.

The protein localises to the secreted. The catalysed reaction is a 1,2-diacyl-sn-glycero-3-phosphocholine + H2O = a 1-acyl-sn-glycero-3-phosphocholine + a fatty acid + H(+). This Vipera renardi (Steppe viper) protein is Acidic phospholipase A2 Vur-PL3.